Here is a 175-residue protein sequence, read N- to C-terminus: uncharacterized protein (175 aa).

A mitochondrion-targeting transit peptide spans 1–11 (METWRKGSFRN). Positions 29–48 (QGSILSQASTAGGDHEEYSN) are disordered.

It localises to the mitochondrion. This is an uncharacterized protein from Mus musculus (Mouse).